A 946-amino-acid polypeptide reads, in one-letter code: Alanine--tRNA ligase, cytoplasmic (946 aa).

Zn(2+)-binding residues include His591, His595, Cys710, and His714.

The protein belongs to the class-II aminoacyl-tRNA synthetase family. Monomer. It depends on Zn(2+) as a cofactor.

The protein localises to the cytoplasm. The enzyme catalyses tRNA(Ala) + L-alanine + ATP = L-alanyl-tRNA(Ala) + AMP + diphosphate. Catalyzes the attachment of alanine to tRNA(Ala) in a two-step reaction: alanine is first activated by ATP to form Ala-AMP and then transferred to the acceptor end of tRNA(Ala). Also edits incorrectly charged tRNA(Ala) via its editing domain. The polypeptide is Alanine--tRNA ligase, cytoplasmic (alaS) (Dictyostelium discoideum (Social amoeba)).